The sequence spans 192 residues: MENQLFQLKFTSKQLEKQSKKSEQSEKAQKIKLKKAIEQGNMDGARIYAQNAIREKNQSLNYLRLASRIDAVASRVETAIRMKSVTGSMANIVKSMEKSMRNMDLEKITQVMDQFERQFEDLDVQSVYVENAMNQTTTLSTPADQVDLLISQVADEHGLNVGMQMGSAPSEKVQQGETDELTERLNRLKQKN.

Coiled-coil stretches lie at residues 7-35 (QLKF…KLKK) and 102-125 (NMDL…LDVQ). Residues 164 to 192 (QMGSAPSEKVQQGETDELTERLNRLKQKN) are disordered.

Belongs to the SNF7 family. As to quaternary structure, probable peripherally associated component of the endosomal sorting required for transport complex III (ESCRT-III).

The protein resides in the endosome membrane. Probable peripherally associated component of the endosomal sorting required for transport complex III (ESCRT-III) which is involved in multivesicular bodies (MVBs) formation and sorting of endosomal cargo proteins into MVBs. MVBs contain intraluminal vesicles (ILVs) that are generated by invagination and scission from the limiting membrane of the endosome and are delivered to lysosomes enabling degradation of membrane proteins. The polypeptide is Charged multivesicular body protein 1 (chmp1) (Dictyostelium discoideum (Social amoeba)).